We begin with the raw amino-acid sequence, 285 residues long: Tropomyosin alpha-3 chain (285 aa).

Positions 1–285 (MMEAIKKKMQ…DHALNDMTSI (285 aa)) form a coiled coil. N-acetylmethionine is present on M2. M2 carries the N-acetylalanine modification. Residues 16 to 41 (KENALDRAEQAEAEQKQAEERSKQLE) are compositionally biased toward basic and acidic residues. A disordered region spans residues 16-44 (KENALDRAEQAEAEQKQAEERSKQLEDEL). The residue at position 54 (T54) is a Phosphothreonine. A phosphoserine mark is found at S62 and S88. Residue T109 is modified to Phosphothreonine. Residues E125 and L177 each carry the N6-acetyllysine modification. S207 carries the post-translational modification Phosphoserine. Y215 bears the N6-acetyllysine mark. S216 carries the post-translational modification Phosphoserine. Position 253 is a phosphothreonine (T253). A Phosphotyrosine modification is found at Y262. Residue S272 is modified to Phosphoserine. T283 is modified (phosphothreonine). Residue S284 is modified to Phosphoserine.

This sequence belongs to the tropomyosin family. In terms of assembly, homodimer. Heterodimer of an alpha (TPM1, TPM3 or TPM4) and a beta (TPM2) chain. Interacts with TMOD1. Interacts with TNNT1.

It localises to the cytoplasm. The protein localises to the cytoskeleton. In terms of biological role, binds to actin filaments in muscle and non-muscle cells. Plays a central role, in association with the troponin complex, in the calcium dependent regulation of vertebrate striated muscle contraction. Smooth muscle contraction is regulated by interaction with caldesmon. In non-muscle cells is implicated in stabilizing cytoskeleton actin filaments. This is Tropomyosin alpha-3 chain (TPM3) from Homo sapiens (Human).